The primary structure comprises 158 residues: Transcription elongation factor GreA (158 aa).

It belongs to the GreA/GreB family.

Functionally, necessary for efficient RNA polymerase transcription elongation past template-encoded arresting sites. The arresting sites in DNA have the property of trapping a certain fraction of elongating RNA polymerases that pass through, resulting in locked ternary complexes. Cleavage of the nascent transcript by cleavage factors such as GreA or GreB allows the resumption of elongation from the new 3'terminus. GreA releases sequences of 2 to 3 nucleotides. The sequence is that of Transcription elongation factor GreA from Psychrobacter sp. (strain PRwf-1).